The chain runs to 87 residues: Small polypeptide ROTUNDIFOLIA LIKE 2 (87 aa).

A helical membrane pass occupies residues 19-35 (LIPHTSHYILQLVYLHL). The tract at residues 56-87 (GQMGRLNRAFREKRARFYIFRRCVIMLLRWSD) is required for DVL/RTFL small polypeptide activity.

Belongs to the DVL/RTFL small polypeptides family.

It is found in the cell membrane. Its function is as follows. Small polypeptide acting as a regulatory molecule which coordinates cellular responses required for differentiation, growth and development, probably by restricting polar cell proliferation in lateral organs. The chain is Small polypeptide ROTUNDIFOLIA LIKE 2 from Oryza sativa subsp. japonica (Rice).